Here is a 524-residue protein sequence, read N- to C-terminus: Magnesium/proton exchanger 2 (524 aa).

11 consecutive transmembrane segments (helical) span residues 28–48, 88–108, 125–145, 157–177, 185–205, 325–345, 349–369, 377–397, 430–450, 462–482, and 496–516; these read GVRA…LSAI, IADV…LATI, GTLV…CVVM, LGVW…LYII, VITL…LLHA, VIGI…AFIP, IAHG…IAYG, ISCV…AAGT, IYVG…LFVY, LSFS…VLVL, and MWAW…VVLS.

This sequence belongs to the Ca(2+):cation antiporter (CaCA) (TC 2.A.19) family. MHX subfamily.

The protein resides in the vacuole membrane. Functionally, vacuolar transporter that exchanges protons with Mg(2+), Zn(2+) and Fe(2+) ions. May control the partitioning of Mg(2+) and Zn(2+) between plant organs. This Oryza sativa subsp. japonica (Rice) protein is Magnesium/proton exchanger 2 (MHX2).